The chain runs to 736 residues: MKKSRSVMTVMADDNVKDYFECSLSKSYSSSSNTLGIDLWRGRRCCSGNLQLPPLSQRQSERARTPEGDGISRPTTLPLTTLPSIAITTVSQECFDVENGPSPGRSPLDPQASSSAGLVLHATFPGHSQRRESFLYRSDSDYDLSPKAMSRNSSLPSEQHGDDLIVTPFAQVLASLRSVRNNFTILTNLHGTSNKRSPAASQPPVSRVNPQEESYQKLAMETLEELDWCLDQLETIQTYRSVSEMASNKFKRMLNRELTHLSEMSRSGNQVSEYISNTFLDKQNDVEIPSPTQKDREKKKKQQLMTQISGVKKLMHSSSLNNTSISRFGVNTENEDHLAKELEDLNKWGLNIFNVAGYSHNRPLTCIMYAIFQERDLLKTFRISSDTFITYMMTLEDHYHSDVAYHNSLHAADVAQSTHVLLSTPALDAVFTDLEILAAIFAAAIHDVDHPGVSNQFLINTNSELALMYNDESVLENHHLAVGFKLLQEEHCDIFMNLTKKQRQTLRKMVIDMVLATDMSKHMSLLADLKTMVETKKVTSSGVLLLDNYTDRIQVLRNMVHCADLSNPTKSLELYRQWTDRIMEEFFQQGDKERERGMEISPMCDKHTASVEKSQVGFIDYIVHPLWETWADLVQPDAQDILDTLEDNRNWYQSMIPQSPSPPLDEQNRDCQGLMEKFQFELTLDEEDSEGPEKEGEGHSYFSSTKTLCVIDPENRDSLGETDIDIATEDKSPVDT.

Disordered regions lie at residues 51 to 78, 189 to 209, and 282 to 301; these read QLPPLSQRQSERARTPEGDGISRPTTLP, LHGTSNKRSPAASQPPVSRVN, and KQNDVEIPSPTQKDREKKKK. Position 290 is a phosphoserine (Ser-290). A PDEase domain is found at 330–659; the sequence is VNTENEDHLA…NWYQSMIPQS (330 aa). Catalysis depends on His-406, which acts as the Proton donor. Residue His-406 participates in 3',5'-cyclic AMP binding. AMP contacts are provided by His-406 and His-410. Residues His-410, His-446, Asp-447, and Asp-564 each contribute to the Zn(2+) site. AMP is bound by residues Asp-447, Asp-564, Gln-615, and Phe-618. Asp-447 provides a ligand contact to Mg(2+). Asp-447 is a binding site for Mn(2+). 3',5'-cyclic AMP-binding residues include Gln-615 and Phe-618. Phosphoserine occurs at positions 659 and 661. Positions 685-736 are disordered; sequence DEEDSEGPEKEGEGHSYFSSTKTLCVIDPENRDSLGETDIDIATEDKSPVDT.

It belongs to the cyclic nucleotide phosphodiesterase family. PDE4 subfamily. Interacts with DISC1. Zn(2+) is required as a cofactor. Requires Mg(2+) as cofactor. The cofactor is Mn(2+). In terms of tissue distribution, expressed in brain, heart, lung and skeletal muscle. Expressed in white blood cells. Brain-specific isoform.

The protein localises to the cytoplasm. It localises to the cell membrane. The catalysed reaction is 3',5'-cyclic AMP + H2O = AMP + H(+). It participates in purine metabolism; 3',5'-cyclic AMP degradation; AMP from 3',5'-cyclic AMP: step 1/1. With respect to regulation, inhibited by rolipram. Hydrolyzes the second messenger cAMP, which is a key regulator of many important physiological processes. May be involved in mediating central nervous system effects of therapeutic agents ranging from antidepressants to antiasthmatic and anti-inflammatory agents. The protein is 3',5'-cyclic-AMP phosphodiesterase 4B of Homo sapiens (Human).